We begin with the raw amino-acid sequence, 222 residues long: Cytidylate kinase 2 (222 aa).

7-15 (GPSGAGKGT) lines the ATP pocket.

This sequence belongs to the cytidylate kinase family. Type 1 subfamily.

It is found in the cytoplasm. The enzyme catalyses CMP + ATP = CDP + ADP. It catalyses the reaction dCMP + ATP = dCDP + ADP. The chain is Cytidylate kinase 2 from Haemophilus influenzae (strain ATCC 51907 / DSM 11121 / KW20 / Rd).